The chain runs to 969 residues: Translation initiation factor IF-2 (969 aa).

Positions 50-370 (SFASKSAPAN…QAPSVGGVRL (321 aa)) are disordered. Over residues 54–76 (KSAPANGAKPGPAASARPGAKPT) the composition is skewed to low complexity. Residues 77–87 (PGGPRPGPRTP) are compositionally biased toward pro residues. Low complexity predominate over residues 88 to 102 (APAASAPQAPAEQTA). Residues 112-124 (AVKPGPAPTPARP) are compositionally biased toward pro residues. Low complexity predominate over residues 125–164 (AAPEAPAAKAAPEAPAQRPTPGGPRPGQQQQRPGAPAQGG). Residues 240–267 (PGGPRPSPGSMPPRPNPGAMPQRTPRPG) are compositionally biased toward pro residues. Gly residues predominate over residues 269–340 (SAGGRPGRPG…GAAGAFGRPG (72 aa)). Residues 344–353 (RRGRKSKRQK) show a composition bias toward basic residues. The tr-type G domain maps to 465-636 (VRPPVVTVMG…AVLLTADAAL (172 aa)). The segment at 474–481 (GHVDHGKT) is G1. A GTP-binding site is contributed by 474–481 (GHVDHGKT). A G2 region spans residues 499-503 (GITQH). The tract at residues 524-527 (DTPG) is G3. GTP is bound by residues 524 to 528 (DTPGH) and 578 to 581 (NKID). The tract at residues 578–581 (NKID) is G4. The tract at residues 614–616 (SAK) is G5.

The protein belongs to the TRAFAC class translation factor GTPase superfamily. Classic translation factor GTPase family. IF-2 subfamily.

It is found in the cytoplasm. One of the essential components for the initiation of protein synthesis. Protects formylmethionyl-tRNA from spontaneous hydrolysis and promotes its binding to the 30S ribosomal subunits. Also involved in the hydrolysis of GTP during the formation of the 70S ribosomal complex. This chain is Translation initiation factor IF-2, found in Nocardia farcinica (strain IFM 10152).